The sequence spans 209 residues: Glycerol-3-phosphate acyltransferase (209 aa).

5 helical membrane-spanning segments follow: residues 13–33 (ALIASLAIGYLLGSIPFGLLL), 63–83 (LAAATLLLDALKATAAALIAQ), 94–114 (PGLLGGFAAFIGHLFPVWLGF), 127–147 (LLGIFPLMVLVFAIVWLSIAF), and 151–171 (YSSLSALVATLVIPVALWILG).

The protein belongs to the PlsY family. As to quaternary structure, probably interacts with PlsX.

It is found in the cell inner membrane. The enzyme catalyses an acyl phosphate + sn-glycerol 3-phosphate = a 1-acyl-sn-glycero-3-phosphate + phosphate. The protein operates within lipid metabolism; phospholipid metabolism. In terms of biological role, catalyzes the transfer of an acyl group from acyl-phosphate (acyl-PO(4)) to glycerol-3-phosphate (G3P) to form lysophosphatidic acid (LPA). This enzyme utilizes acyl-phosphate as fatty acyl donor, but not acyl-CoA or acyl-ACP. In Allorhizobium ampelinum (strain ATCC BAA-846 / DSM 112012 / S4) (Agrobacterium vitis (strain S4)), this protein is Glycerol-3-phosphate acyltransferase.